Consider the following 1662-residue polypeptide: ABC transporter A family member 5 (1662 aa).

The next 7 helical transmembrane spans lie at 30 to 50 (IVFPIIIVLLVFAILVLVQLF), 242 to 262 (SVFVSAALLIFTFRLVTELVV), 284 to 304 (ISWIITSLVTALPIDLIIIVI), 317 to 337 (IIVIVTLILYLLTLQLLAFIF), 346 to 366 (FAGLLTFLTILLINICGIFIG), 377 to 397 (LLLCCIFSPIGIACSFYIMSI), and 417 to 437 (QIIGTFVFNIIFYTFLIWYLD). Positions 505–739 (ISIRNLRKEF…YGVGYLLTCS (235 aa)) constitute an ABC transporter 1 domain. 541–548 (GPNGSGKS) lines the ATP pocket. 7 consecutive transmembrane segments (helical) span residues 872–892 (FKAFLLSLLLPLLVIIGSIIV), 1052–1072 (IVYFIVIMMAGFSLMAGSFAG), 1102–1122 (LWDYFFAFILLLITCIILAIV), 1130–1150 (FGLFFLSLVLFSLSIIPLSYL), 1163–1183 (GAITAIHFSIGVIMTIAMIIL), 1201–1221 (IIDIVFNILSPLYAFSRVIFI), and 1246–1266 (STPIIILSVHVVVWTIFILLI). Residues 1322 to 1557 (LQYKGLHKLF…FGAGYSVEVK (236 aa)) enclose the ABC transporter 2 domain. 1360–1367 (GLNGAGKT) serves as a coordination point for ATP.

The protein belongs to the ABC transporter superfamily. ABCA family.

It localises to the membrane. This Dictyostelium discoideum (Social amoeba) protein is ABC transporter A family member 5 (abcA5).